The primary structure comprises 337 residues: Inositol 2-dehydrogenase (337 aa).

Belongs to the Gfo/Idh/MocA family. In terms of assembly, homotetramer.

The catalysed reaction is myo-inositol + NAD(+) = scyllo-inosose + NADH + H(+). In terms of biological role, involved in the oxidation of myo-inositol (MI) to 2-keto-myo-inositol (2KMI or 2-inosose). In Burkholderia vietnamiensis (strain G4 / LMG 22486) (Burkholderia cepacia (strain R1808)), this protein is Inositol 2-dehydrogenase.